The sequence spans 131 residues: Arsenate reductase (131 aa).

Residues Cys10, Cys82, and Cys89 each act as nucleophile in the active site. 2 disulfide bridges follow: Cys10–Cys82 and Cys82–Cys89.

It belongs to the low molecular weight phosphotyrosine protein phosphatase family. Thioredoxin-coupled ArsC subfamily.

Its subcellular location is the cytoplasm. It catalyses the reaction arsenate + [thioredoxin]-dithiol + H(+) = arsenite + [thioredoxin]-disulfide + H2O. In terms of biological role, catalyzes the reduction of arsenate [As(V)] to arsenite [As(III)]. This Staphylococcus aureus (strain N315) protein is Arsenate reductase.